The following is a 761-amino-acid chain: Complement factor B (761 aa).

The first 25 residues, 1–25 (MGIGHNPRLCLVPLILGLLCGGVGM), serve as a signal peptide directing secretion. 3 consecutive Sushi domains span residues 35–100 (SPCS…ECKA), 101–160 (IRCP…ICDD), and 163–220 (TYCP…SCQD). 6 disulfides stabilise this stretch: cysteine 37-cysteine 76, cysteine 62-cysteine 98, cysteine 103-cysteine 145, cysteine 131-cysteine 158, cysteine 165-cysteine 205, and cysteine 191-cysteine 218. Residues asparagine 122 and asparagine 142 are each glycosylated (N-linked (GlcNAc...) asparagine). Positions 270–469 (NIYLVLDGSD…NLEDVFVQML (200 aa)) constitute a VWFA domain. Mg(2+) is bound by residues serine 278 and serine 280. N-linked (GlcNAc...) asparagine glycosylation is present at asparagine 285. Threonine 353 is a Mg(2+) binding site. N-linked (GlcNAc...) asparagine glycosylation occurs at asparagine 378. A Peptidase S1 domain is found at 477–754 (LCGMVWEHKD…VLPWLKEKLQ (278 aa)). 5 disulfide bridges follow: cysteine 478–cysteine 596, cysteine 511–cysteine 527, cysteine 599–cysteine 615, cysteine 656–cysteine 682, and cysteine 695–cysteine 725. Catalysis depends on charge relay system residues histidine 526 and aspartate 576. Serine 699 serves as the catalytic Charge relay system.

Belongs to the peptidase S1 family. As to quaternary structure, monomer. Interacts with complement C3b; this interaction is dependent on the presence of Mg(2+). In terms of assembly, catalytic component of the C3 convertase of the alternative complement pathway, also named C3bBb, composed of complement factor B Bb and complement C3b. Catalytic component of the C5 convertase of the alternative complement pathway, also named C3bBb3b, composed of complement factor B Bb and additional molecules of complement C3b. Interacts to CFP; this interaction contributes to the stabilization of the active C3-convertase enzyme complex. Requires Mg(2+) as cofactor. It depends on Mn(2+) as a cofactor. Cleaved by CFD following activation of the alternative complement system, generating Ba and Bb chains. Cleavage and activation takes place when CFB is already associated with complement C3b.

It is found in the secreted. The protein localises to the cell surface. It catalyses the reaction Cleavage of Arg-|-Ser bond in complement component C3 alpha-chain to yield C3a and C3b, and Arg-|-Xaa bond in complement component C5 alpha-chain to yield C5a and C5b.. Its function is as follows. Precursor of the catalytic component of the C3 and C5 convertase complexes of the alternative pathway of the complement system, a cascade of proteins that leads to phagocytosis and breakdown of pathogens and signaling that strengthens the adaptive immune system. The alternative complement pathway acts as an amplification loop that enhances other complement pathways (classical, lectin and GZMK) by promoting formation of additional C3 and C5 convertases. CFB is cleaved and activated by CFD to generate Ba and Bb chains; Bb chain constituting the catalytic component of the C3 and C5 convertases. Serine protease component of the complement C3 and C5 convertase complexes of the alternative complement pathway. Following cleavage and activation by factor D (CFD), forms the C3 convertase together with complement C3b. As part of the C3 convertase, cleaves and activates C3 into C3a anaphylatoxin and C3b opsonin, the next components of the complement pathways. When an additional complement C3b molecule binds to the C3 convertase, forms the C5 convertase, which cleaves and activates C5 into C5a anaphylatoxin and C5b component of the membrane attack complex. Functionally, involved in proliferation and differentiation of preactivated B-lymphocytes, rapid spreading of peripheral blood monocytes, stimulation of lymphocyte blastogenesis and lysis of erythrocytes. The sequence is that of Complement factor B (CFB) from Bos taurus (Bovine).